We begin with the raw amino-acid sequence, 293 residues long: Glutamine sensor pib2 (293 aa).

Positions 38–75 (APTRQATNGTGSVSGSPNSSSNSTPANQGSLPSHTNPQ) are disordered. A compositionally biased stretch (low complexity) spans 44–62 (TNGTGSVSGSPNSSSNSTP). Residues 63 to 75 (ANQGSLPSHTNPQ) show a composition bias toward polar residues. The FYVE-type; degenerate zinc finger occupies 156–220 (DVSVCSFPSC…SCVSCFYEYL (65 aa)). 4 residues coordinate Zn(2+): cysteine 178, cysteine 181, cysteine 212, and cysteine 215. The span at 242–256 (APQQATTHPPSQPKN) shows a compositional bias: polar residues. Residues 242-276 (APQQATTHPPSQPKNAVSVPIPKMDSTDSKGELPS) form a disordered region. A Phosphoserine modification is found at serine 259.

Interacts with the TORC1 complex when activated by glutamine or cysteine.

It localises to the vacuole membrane. Activated by glutamine. Its function is as follows. Functions as an intracellular glutamine sensor that directly activates the TORC1 signaling pathway, to promote cell growth when glutamine is available. This is Glutamine sensor pib2 from Schizosaccharomyces pombe (strain 972 / ATCC 24843) (Fission yeast).